We begin with the raw amino-acid sequence, 89 residues long: Small ribosomal subunit protein uS15 (89 aa).

Belongs to the universal ribosomal protein uS15 family. In terms of assembly, part of the 30S ribosomal subunit. Forms a bridge to the 50S subunit in the 70S ribosome, contacting the 23S rRNA.

In terms of biological role, one of the primary rRNA binding proteins, it binds directly to 16S rRNA where it helps nucleate assembly of the platform of the 30S subunit by binding and bridging several RNA helices of the 16S rRNA. Its function is as follows. Forms an intersubunit bridge (bridge B4) with the 23S rRNA of the 50S subunit in the ribosome. The chain is Small ribosomal subunit protein uS15 from Thermodesulfovibrio yellowstonii (strain ATCC 51303 / DSM 11347 / YP87).